A 936-amino-acid chain; its full sequence is Isoleucine--tRNA ligase (936 aa).

The 'HIGH' region motif lies at 58-68 (PYANGRAHLGT). Glu561 serves as a coordination point for L-isoleucyl-5'-AMP. A 'KMSKS' region motif is present at residues 602-606 (KMSKS). Lys605 contributes to the ATP binding site. Zn(2+) contacts are provided by Cys899, Cys902, Cys919, and Cys922.

The protein belongs to the class-I aminoacyl-tRNA synthetase family. IleS type 1 subfamily. In terms of assembly, monomer. Zn(2+) serves as cofactor.

It is found in the cytoplasm. It catalyses the reaction tRNA(Ile) + L-isoleucine + ATP = L-isoleucyl-tRNA(Ile) + AMP + diphosphate. Its function is as follows. Catalyzes the attachment of isoleucine to tRNA(Ile). As IleRS can inadvertently accommodate and process structurally similar amino acids such as valine, to avoid such errors it has two additional distinct tRNA(Ile)-dependent editing activities. One activity is designated as 'pretransfer' editing and involves the hydrolysis of activated Val-AMP. The other activity is designated 'posttransfer' editing and involves deacylation of mischarged Val-tRNA(Ile). This is Isoleucine--tRNA ligase from Coxiella burnetii (strain Dugway 5J108-111).